A 615-amino-acid polypeptide reads, in one-letter code: Zinc metalloproteinase R519 (615 aa).

Residues 1-611 (MTYRSCIPQN…LDPQLRSRIL (611 aa)) form the Peptidase M13 domain. Histidine 454 is a Zn(2+) binding site. Residue glutamate 455 is part of the active site. Histidine 458 and glutamate 513 together coordinate Zn(2+). Aspartate 517 (proton donor) is an active-site residue.

Belongs to the peptidase M13 family. Zn(2+) is required as a cofactor.

Zinc metalloprotease. This is Zinc metalloproteinase R519 from Acanthamoeba polyphaga (Amoeba).